The primary structure comprises 590 residues: Aspartate--tRNA ligase (590 aa).

E174 is an L-aspartate binding site. The segment at 198 to 201 (QLMK) is aspartate. Position 220 (R220) interacts with L-aspartate. ATP contacts are provided by residues 220-222 (RDE) and Q229. H443 contacts L-aspartate. E484 serves as a coordination point for ATP. Position 491 (R491) interacts with L-aspartate. Position 536–539 (536–539 (GLDR)) interacts with ATP.

The protein belongs to the class-II aminoacyl-tRNA synthetase family. Type 1 subfamily. Homodimer.

It is found in the cytoplasm. The enzyme catalyses tRNA(Asp) + L-aspartate + ATP = L-aspartyl-tRNA(Asp) + AMP + diphosphate. Its function is as follows. Catalyzes the attachment of L-aspartate to tRNA(Asp) in a two-step reaction: L-aspartate is first activated by ATP to form Asp-AMP and then transferred to the acceptor end of tRNA(Asp). This chain is Aspartate--tRNA ligase, found in Lactococcus lactis subsp. lactis (strain IL1403) (Streptococcus lactis).